The chain runs to 82 residues: uncharacterized protein (82 aa).

This sequence belongs to the chlamydial CPn_0711/CT_665/TC_0036 family.

This is an uncharacterized protein from Chlamydia pneumoniae (Chlamydophila pneumoniae).